The following is a 321-amino-acid chain: PIH1 domain-containing protein 2 (321 aa).

This sequence belongs to the PIH1 family.

This Xenopus tropicalis (Western clawed frog) protein is PIH1 domain-containing protein 2 (pih1d2).